The chain runs to 414 residues: Esterase FrsA (414 aa).

The protein belongs to the FrsA family.

It carries out the reaction a carboxylic ester + H2O = an alcohol + a carboxylate + H(+). Functionally, catalyzes the hydrolysis of esters. This chain is Esterase FrsA, found in Escherichia coli O157:H7.